The primary structure comprises 252 residues: Probable phosphatase SO_1652 (252 aa).

Residues histidine 8, histidine 10, histidine 16, histidine 41, glutamate 74, histidine 102, histidine 132, aspartate 193, and histidine 195 each contribute to the Zn(2+) site.

It belongs to the PHP family. The cofactor is Zn(2+).

The polypeptide is Probable phosphatase SO_1652 (Shewanella oneidensis (strain ATCC 700550 / JCM 31522 / CIP 106686 / LMG 19005 / NCIMB 14063 / MR-1)).